Reading from the N-terminus, the 259-residue chain is Ras-related protein Rab-34 (259 aa).

The residue at position 1 (methionine 1) is an N-acetylmethionine. The GTP site is built by serine 62, valine 63, glycine 64, lysine 65, threonine 66, aspartate 78, tyrosine 81, and threonine 84. Residue threonine 66 participates in Mg(2+) binding. Positions 71–89 (RFCKDTFDKNYKATIGVDF) match the Switch 1 motif. Mg(2+)-binding residues include threonine 84 and aspartate 107. A Switch 2 motif is present at residues 108 to 127 (TAGQERFKCIASTYYRGAQA). 4 residues coordinate GTP: glycine 110, lysine 167, aspartate 169, and serine 198. Serine 241 and serine 244 each carry phosphoserine. 2 S-geranylgeranyl cysteine lipidation sites follow: cysteine 257 and cysteine 258.

This sequence belongs to the small GTPase superfamily. Rab family. As to quaternary structure, interacts with RILP. The GTP-bound form interacts with REP15. Mg(2+) is required as a cofactor.

It localises to the cytoplasm. The protein resides in the golgi apparatus. It is found in the cytoplasmic vesicle. The protein localises to the phagosome. Its subcellular location is the phagosome membrane. It localises to the cell projection. The protein resides in the cilium. It is found in the cytoskeleton. The protein localises to the microtubule organizing center. Its subcellular location is the centrosome. It localises to the centriole. It carries out the reaction GTP + H2O = GDP + phosphate + H(+). With respect to regulation, regulated by guanine nucleotide exchange factors (GEFs) which promote the exchange of bound GDP for free GTP. Regulated by GTPase activating proteins (GAPs) which increase the GTP hydrolysis activity. Inhibited by GDP dissociation inhibitors (GDIs). Its function is as follows. The small GTPases Rab are key regulators of intracellular membrane trafficking, from the formation of transport vesicles to their fusion with membranes. Rabs cycle between an inactive GDP-bound form and an active GTP-bound form that is able to recruit to membranes different sets of downstream effectors directly responsible for vesicle formation, movement, tethering and fusion. RAB34 transports protein involved in the redistribution of lysosomes to the peri-Golgi region. Plays a role in the maturation of phagosomes that engulf pathogens, such as S.aureus and M.tuberculosis. Plays a role in the fusion of phagosomes with lysosomes. Involved in ciliogenesis. In particular, it is required for early steps of the intracellular cilium assembly pathway initiated by trafficking and docking of ciliary vesicles to the centrioles in the cytoplasm, followed by axoneme formation in the cytoplasm. After axoneme elongation, the centrioles migrate close to the cell surface so that ciliary vesicles can fuse with the plasma membrane to expose cilia to the extracellular space. It seems dispensable for ciliogenesis via the extracellular pathway where cilium assembly begins after migration and docking of the centriole to the plasma membrane. Also acts as a positive regulator of hedgehog signaling and regulates ciliary function. In Homo sapiens (Human), this protein is Ras-related protein Rab-34.